Here is a 151-residue protein sequence, read N- to C-terminus: D-aminoacyl-tRNA deacylase (151 aa).

Residues 137–138 carry the Gly-cisPro motif, important for rejection of L-amino acids motif; the sequence is GP.

It belongs to the DTD family. In terms of assembly, homodimer.

The protein localises to the cytoplasm. The enzyme catalyses glycyl-tRNA(Ala) + H2O = tRNA(Ala) + glycine + H(+). The catalysed reaction is a D-aminoacyl-tRNA + H2O = a tRNA + a D-alpha-amino acid + H(+). Its function is as follows. An aminoacyl-tRNA editing enzyme that deacylates mischarged D-aminoacyl-tRNAs. Also deacylates mischarged glycyl-tRNA(Ala), protecting cells against glycine mischarging by AlaRS. Acts via tRNA-based rather than protein-based catalysis; rejects L-amino acids rather than detecting D-amino acids in the active site. By recycling D-aminoacyl-tRNA to D-amino acids and free tRNA molecules, this enzyme counteracts the toxicity associated with the formation of D-aminoacyl-tRNA entities in vivo and helps enforce protein L-homochirality. The protein is D-aminoacyl-tRNA deacylase of Acaryochloris marina (strain MBIC 11017).